Here is a 439-residue protein sequence, read N- to C-terminus: DNA primase DnaG (439 aa).

One can recognise a Toprim domain in the interval 169 to 243 (DSIIVVEGRA…DIDYVARAPY (75 aa)). Residues Glu-175, Asp-217, and Asp-219 each contribute to the Mg(2+) site.

This sequence belongs to the archaeal DnaG primase family. As to quaternary structure, forms a ternary complex with MCM helicase and DNA. Mg(2+) is required as a cofactor.

The enzyme catalyses ssDNA + n NTP = ssDNA/pppN(pN)n-1 hybrid + (n-1) diphosphate.. Functionally, RNA polymerase that catalyzes the synthesis of short RNA molecules used as primers for DNA polymerase during DNA replication. This chain is DNA primase DnaG, found in Methanococcus maripaludis (strain C7 / ATCC BAA-1331).